The following is a 90-amino-acid chain: Serine protease inhibitor kazal-like protein, minor form (90 aa).

The signal sequence occupies residues 1–23; it reads MSSTWIKFLFILTLVLLPYSVFS. The region spanning 33 to 89 is the Kazal-like domain; sequence VIKEPNCTMYKSKSECSNIAENPVCADDRNTYYNECYFCIEKVVEKLKYRYHGICIY. N38 carries an N-linked (GlcNAc...) asparagine glycan.

Luminal fluid and mucosal folds of the seminal vesicles (at protein level). Not detected in brain, heart, lung, liver, kidney, stomach, small intestine, muscle, skin, thymus, placenta or bladder.

The protein resides in the secreted. Its function is as follows. Does not function as an inhibitor of trypsin, chymotrypsin, subtilisin or elastase. Binds sperm and enhances sperm motility. May act as a decapacitation factor, suppresses BSA-stimulated sperm capacitation and blocks sperm-oocyte interactions in vitro. This Mus musculus (Mouse) protein is Serine protease inhibitor kazal-like protein, minor form (Spinkl).